The chain runs to 200 residues: Small ribosomal subunit protein uS4 (200 aa).

A disordered region spans residues 22–41 (TGKEIEKRPYAPGQHGPNQR). The S4 RNA-binding domain occupies 92–152 (TRLDNLVYRL…EKSQNLAVVG (61 aa)).

This sequence belongs to the universal ribosomal protein uS4 family. As to quaternary structure, part of the 30S ribosomal subunit. Contacts protein S5. The interaction surface between S4 and S5 is involved in control of translational fidelity.

In terms of biological role, one of the primary rRNA binding proteins, it binds directly to 16S rRNA where it nucleates assembly of the body of the 30S subunit. Functionally, with S5 and S12 plays an important role in translational accuracy. The protein is Small ribosomal subunit protein uS4 of Lysinibacillus sphaericus (strain C3-41).